A 199-amino-acid chain; its full sequence is Large ribosomal subunit protein uL5 (199 aa).

The protein belongs to the universal ribosomal protein uL5 family. Part of the 50S ribosomal subunit; part of the 5S rRNA/L5/L18/L25 subcomplex. Contacts the 5S rRNA and the P site tRNA. Forms a bridge to the 30S subunit in the 70S ribosome.

Functionally, this is one of the proteins that bind and probably mediate the attachment of the 5S RNA into the large ribosomal subunit, where it forms part of the central protuberance. In the 70S ribosome it contacts protein S13 of the 30S subunit (bridge B1b), connecting the 2 subunits; this bridge is implicated in subunit movement. Contacts the P site tRNA; the 5S rRNA and some of its associated proteins might help stabilize positioning of ribosome-bound tRNAs. The chain is Large ribosomal subunit protein uL5 from Frankia casuarinae (strain DSM 45818 / CECT 9043 / HFP020203 / CcI3).